Consider the following 233-residue polypeptide: Ribonuclease 3 (233 aa).

The RNase III domain occupies 4 to 126; it reads LNKLMERLGH…IVGAIYIDAG (123 aa). Glu39 is a Mg(2+) binding site. Asp43 is a catalytic residue. Mg(2+) is bound by residues Asp112 and Glu115. The active site involves Glu115. The DRBM domain occupies 153-222; the sequence is DAKSLLQEWL…AKRFLELLDD (70 aa).

Belongs to the ribonuclease III family. As to quaternary structure, homodimer. Mg(2+) serves as cofactor.

Its subcellular location is the cytoplasm. The enzyme catalyses Endonucleolytic cleavage to 5'-phosphomonoester.. Functionally, digests double-stranded RNA. Involved in the processing of primary rRNA transcript to yield the immediate precursors to the large and small rRNAs (23S and 16S). Processes some mRNAs, and tRNAs when they are encoded in the rRNA operon. Processes pre-crRNA and tracrRNA of type II CRISPR loci if present in the organism. The polypeptide is Ribonuclease 3 (Coxiella burnetii (strain Dugway 5J108-111)).